The primary structure comprises 437 residues: 5-hydroxytryptamine receptor 3B (437 aa).

An N-terminal signal peptide occupies residues 1-21 (MILLWSCLLVAVVGILGTATP). Over 22–238 (QPGNSSLHRL…VVIRRCPLAY (217 aa)) the chain is Extracellular. Residues N25, N92, and N134 are each glycosylated (N-linked (GlcNAc...) asparagine). C151 and C165 form a disulfide bridge. The chain crosses the membrane as a helical span at residues 239–259 (VVSLLIPSIFLMLVDLGSFYL). Residues 260–264 (PPNCR) are Cytoplasmic-facing. The helical transmembrane segment at 265–282 (ARIVFKTNVLVGYTVFRV) threads the bilayer. N-linked (GlcNAc...) asparagine glycosylation occurs at N283. The Extracellular segment spans residues 283–292 (NMSDEVPRSA). The chain crosses the membrane as a helical span at residues 293–313 (GCTPLIGVFFTVCMALLVLSL). Over 314–410 (SKSILLIKFL…WLAILYRFDQ (97 aa)) the chain is Cytoplasmic. An HA-stretch; determines single-channel conductance in 5-HT3 receptors region spans residues 377–409 (FWFQFRSINNSLRTRDQIHQKEVEWLAILYRFD). The chain crosses the membrane as a helical span at residues 411-431 (LLFRIYLAVLGLYTVTLCSLW). At 432–437 (ALWSRM) the chain is on the extracellular side.

The protein belongs to the ligand-gated ion channel (TC 1.A.9) family. 5-hydroxytryptamine receptor (TC 1.A.9.2) subfamily. HTR3B sub-subfamily. As to quaternary structure, forms homopentameric as well as heteropentameric serotonin-activated cation-selective channel complexes with HTR3A. The homomeric complex is not functional. Heteropentameric complexes display properties which resemble that of neuronal serotonin-activated channels in vivo. N-glycosylation is required for membrane localization.

Its subcellular location is the postsynaptic cell membrane. It is found in the cell membrane. It carries out the reaction Na(+)(in) = Na(+)(out). The enzyme catalyses K(+)(in) = K(+)(out). The catalysed reaction is Ca(2+)(in) = Ca(2+)(out). In terms of biological role, forms serotonin (5-hydroxytryptamine/5-HT3)-activated cation-selective channel complexes, which when activated cause fast, depolarizing responses in neurons. This is 5-hydroxytryptamine receptor 3B from Mus musculus (Mouse).